The sequence spans 411 residues: Dual-specificity RNA methyltransferase RlmN (411 aa).

Glu125 (proton acceptor) is an active-site residue. The region spanning 131–380 is the Radical SAM core domain; it reads EEGRGTLCIS…IRTPRGRDIL (250 aa). An intrachain disulfide couples Cys138 to Cys383. [4Fe-4S] cluster is bound by residues Cys145, Cys149, and Cys152. Residues 209-210, Ser241, 263-265, and Asn340 contribute to the S-adenosyl-L-methionine site; these read GE and SLH. Cys383 functions as the S-methylcysteine intermediate in the catalytic mechanism.

The protein belongs to the radical SAM superfamily. RlmN family. [4Fe-4S] cluster serves as cofactor.

It localises to the cytoplasm. It catalyses the reaction adenosine(2503) in 23S rRNA + 2 reduced [2Fe-2S]-[ferredoxin] + 2 S-adenosyl-L-methionine = 2-methyladenosine(2503) in 23S rRNA + 5'-deoxyadenosine + L-methionine + 2 oxidized [2Fe-2S]-[ferredoxin] + S-adenosyl-L-homocysteine. The catalysed reaction is adenosine(37) in tRNA + 2 reduced [2Fe-2S]-[ferredoxin] + 2 S-adenosyl-L-methionine = 2-methyladenosine(37) in tRNA + 5'-deoxyadenosine + L-methionine + 2 oxidized [2Fe-2S]-[ferredoxin] + S-adenosyl-L-homocysteine. Functionally, specifically methylates position 2 of adenine 2503 in 23S rRNA and position 2 of adenine 37 in tRNAs. m2A2503 modification seems to play a crucial role in the proofreading step occurring at the peptidyl transferase center and thus would serve to optimize ribosomal fidelity. This Brucella abortus (strain S19) protein is Dual-specificity RNA methyltransferase RlmN.